We begin with the raw amino-acid sequence, 138 residues long: Thyrotropin subunit beta (138 aa).

A signal peptide spans Met1 to Ser20. 6 disulfides stabilise this stretch: Cys22-Cys72, Cys36-Cys87, Cys39-Cys125, Cys47-Cys103, Cys51-Cys105, and Cys108-Cys115. An N-linked (GlcNAc...) asparagine glycan is attached at Asn43. Residues Val133–Ile138 constitute a propeptide that is removed on maturation.

It belongs to the glycoprotein hormones subunit beta family. In terms of assembly, heterodimer of a common alpha chain and a unique beta chain which confers biological specificity to thyrotropin, lutropin, follitropin and gonadotropin.

Its subcellular location is the secreted. Indispensable for the control of thyroid structure and metabolism. The protein is Thyrotropin subunit beta (TSHB) of Canis lupus familiaris (Dog).